Consider the following 531-residue polypeptide: Peptide chain release factor 3 (531 aa).

In terms of domain architecture, tr-type G spans Gly-11–Gly-280. GTP contacts are provided by residues Ser-20–Thr-27, Asp-88–His-92, and Asn-142–Asp-145.

The protein belongs to the TRAFAC class translation factor GTPase superfamily. Classic translation factor GTPase family. PrfC subfamily.

Its subcellular location is the cytoplasm. Its function is as follows. Increases the formation of ribosomal termination complexes and stimulates activities of RF-1 and RF-2. It binds guanine nucleotides and has strong preference for UGA stop codons. It may interact directly with the ribosome. The stimulation of RF-1 and RF-2 is significantly reduced by GTP and GDP, but not by GMP. The polypeptide is Peptide chain release factor 3 (Gloeobacter violaceus (strain ATCC 29082 / PCC 7421)).